Reading from the N-terminus, the 79-residue chain is MAEAGARRPFFRRRKTCPFTGPNAPKIDYKDSKLLMRYVSERGKIVPSRITAVSAKKQRELARAIKRSRFLGLLPYVIR.

It belongs to the bacterial ribosomal protein bS18 family. In terms of assembly, part of the 30S ribosomal subunit. Forms a tight heterodimer with protein bS6.

Binds as a heterodimer with protein bS6 to the central domain of the 16S rRNA, where it helps stabilize the platform of the 30S subunit. The protein is Small ribosomal subunit protein bS18 of Rhodopseudomonas palustris (strain BisB18).